The primary structure comprises 428 residues: UDP-N-acetylglucosamine 1-carboxyvinyltransferase (428 aa).

Position 25-26 (25-26) interacts with phosphoenolpyruvate; it reads KN. Position 102 (Arg102) interacts with UDP-N-acetyl-alpha-D-glucosamine. The Proton donor role is filled by Cys126. A 2-(S-cysteinyl)pyruvic acid O-phosphothioketal modification is found at Cys126. UDP-N-acetyl-alpha-D-glucosamine contacts are provided by Asp316 and Val338.

Belongs to the EPSP synthase family. MurA subfamily.

It is found in the cytoplasm. The enzyme catalyses phosphoenolpyruvate + UDP-N-acetyl-alpha-D-glucosamine = UDP-N-acetyl-3-O-(1-carboxyvinyl)-alpha-D-glucosamine + phosphate. It functions in the pathway cell wall biogenesis; peptidoglycan biosynthesis. Cell wall formation. Adds enolpyruvyl to UDP-N-acetylglucosamine. The protein is UDP-N-acetylglucosamine 1-carboxyvinyltransferase of Anaplasma marginale (strain St. Maries).